A 376-amino-acid chain; its full sequence is UDP-N-acetylglucosamine--N-acetylmuramyl-(pentapeptide) pyrophosphoryl-undecaprenol N-acetylglucosamine transferase (376 aa).

UDP-N-acetyl-alpha-D-glucosamine-binding positions include 12 to 14, Asn125, Arg165, Ser197, and Gln296; that span reads TGG.

This sequence belongs to the glycosyltransferase 28 family. MurG subfamily.

The protein localises to the cell inner membrane. It carries out the reaction di-trans,octa-cis-undecaprenyl diphospho-N-acetyl-alpha-D-muramoyl-L-alanyl-D-glutamyl-meso-2,6-diaminopimeloyl-D-alanyl-D-alanine + UDP-N-acetyl-alpha-D-glucosamine = di-trans,octa-cis-undecaprenyl diphospho-[N-acetyl-alpha-D-glucosaminyl-(1-&gt;4)]-N-acetyl-alpha-D-muramoyl-L-alanyl-D-glutamyl-meso-2,6-diaminopimeloyl-D-alanyl-D-alanine + UDP + H(+). It functions in the pathway cell wall biogenesis; peptidoglycan biosynthesis. Functionally, cell wall formation. Catalyzes the transfer of a GlcNAc subunit on undecaprenyl-pyrophosphoryl-MurNAc-pentapeptide (lipid intermediate I) to form undecaprenyl-pyrophosphoryl-MurNAc-(pentapeptide)GlcNAc (lipid intermediate II). The polypeptide is UDP-N-acetylglucosamine--N-acetylmuramyl-(pentapeptide) pyrophosphoryl-undecaprenol N-acetylglucosamine transferase (Protochlamydia amoebophila (strain UWE25)).